Consider the following 111-residue polypeptide: Fertilization-influencing membrane protein (111 aa).

Positions 1–23 are cleaved as a signal peptide; the sequence is MKLWLWVAVGVWMLMAELGTIET. The chain crosses the membrane as a helical span at residues 85–105; sequence ILVGTLVVAFFFLLFQFCLHV.

As to expression, testis-specific.

The protein localises to the cell membrane. The protein resides in the secreted. In terms of biological role, plays a role in sperm-oocyte fusion process during fertilization. This chain is Fertilization-influencing membrane protein, found in Mus musculus (Mouse).